Consider the following 86-residue polypeptide: Small ribosomal subunit protein bS20 (86 aa).

Over residues 1–27 (MANSKSAKKRATQAERRRQHNASRRSM) the composition is skewed to basic residues. The disordered stretch occupies residues 1-28 (MANSKSAKKRATQAERRRQHNASRRSMM).

Belongs to the bacterial ribosomal protein bS20 family.

Its function is as follows. Binds directly to 16S ribosomal RNA. The chain is Small ribosomal subunit protein bS20 from Aliivibrio fischeri (strain MJ11) (Vibrio fischeri).